The primary structure comprises 323 residues: G patch domain-containing protein 4 (323 aa).

Disordered regions lie at residues M1–R32, G84–N110, P124–L185, and A197–E323. Basic and acidic residues-rich tracts occupy residues S9–R32 and G84–D94. A G-patch domain is found at G11 to A57. Residues K131–S141 show a composition bias toward low complexity. Over residues E252–S261 the composition is skewed to acidic residues. Positions S281–R291 are enriched in basic residues. The segment covering S294–T306 has biased composition (polar residues). A compositionally biased stretch (basic residues) spans K311 to E323.

This chain is G patch domain-containing protein 4 (gpatch4), found in Xenopus tropicalis (Western clawed frog).